The chain runs to 111 residues: T cell receptor beta variable 30 (111 aa).

The N-terminal stretch at 1 to 18 is a signal peptide; sequence MLCSLLALLLGTFFGVRS. The Ig-like domain maps to 19–111; sequence QTIHQWPATL…DSGFYLCAWS (93 aa). Residues C40 and C108 are joined by a disulfide bond. The N-linked (GlcNAc...) asparagine glycan is linked to N80.

Alpha-beta TR is a heterodimer composed of an alpha and beta chain; disulfide-linked. The alpha-beta TR is associated with the transmembrane signaling CD3 coreceptor proteins to form the TR-CD3 (TcR or TCR). The assembly of alpha-beta TR heterodimers with CD3 occurs in the endoplasmic reticulum where a single alpha-beta TR heterodimer associates with one CD3D-CD3E heterodimer, one CD3G-CD3E heterodimer and one CD247 homodimer forming a stable octameric structure. CD3D-CD3E and CD3G-CD3E heterodimers preferentially associate with TR alpha and TR beta chains, respectively. The association of the CD247 homodimer is the last step of TcR assembly in the endoplasmic reticulum and is required for transport to the cell surface.

It localises to the cell membrane. V region of the variable domain of T cell receptor (TR) beta chain that participates in the antigen recognition. Alpha-beta T cell receptors are antigen specific receptors which are essential to the immune response and are present on the cell surface of T lymphocytes. Recognize peptide-major histocompatibility (MH) (pMH) complexes that are displayed by antigen presenting cells (APC), a prerequisite for efficient T cell adaptive immunity against pathogens. Binding of alpha-beta TR to pMH complex initiates TR-CD3 clustering on the cell surface and intracellular activation of LCK that phosphorylates the ITAM motifs of CD3G, CD3D, CD3E and CD247 enabling the recruitment of ZAP70. In turn ZAP70 phosphorylates LAT, which recruits numerous signaling molecules to form the LAT signalosome. The LAT signalosome propagates signal branching to three major signaling pathways, the calcium, the mitogen-activated protein kinase (MAPK) kinase and the nuclear factor NF-kappa-B (NF-kB) pathways, leading to the mobilization of transcription factors that are critical for gene expression and essential for T cell growth and differentiation. The T cell repertoire is generated in the thymus, by V-(D)-J rearrangement. This repertoire is then shaped by intrathymic selection events to generate a peripheral T cell pool of self-MH restricted, non-autoaggressive T cells. Post-thymic interaction of alpha-beta TR with the pMH complexes shapes TR structural and functional avidity. The sequence is that of T cell receptor beta variable 30 from Homo sapiens (Human).